The following is a 165-amino-acid chain: Urease accessory protein UreE (165 aa).

It belongs to the UreE family.

It localises to the cytoplasm. In terms of biological role, involved in urease metallocenter assembly. Binds nickel. Probably functions as a nickel donor during metallocenter assembly. This chain is Urease accessory protein UreE, found in Micrococcus luteus (strain ATCC 4698 / DSM 20030 / JCM 1464 / CCM 169 / CCUG 5858 / IAM 1056 / NBRC 3333 / NCIMB 9278 / NCTC 2665 / VKM Ac-2230) (Micrococcus lysodeikticus).